Here is a 198-residue protein sequence, read N- to C-terminus: Recombination protein RecR (198 aa).

The C4-type zinc-finger motif lies at cysteine 56–cysteine 71. In terms of domain architecture, Toprim spans glycine 79–proline 174.

Belongs to the RecR family.

Functionally, may play a role in DNA repair. It seems to be involved in an RecBC-independent recombinational process of DNA repair. It may act with RecF and RecO. The polypeptide is Recombination protein RecR (Tropheryma whipplei (strain Twist) (Whipple's bacillus)).